We begin with the raw amino-acid sequence, 134 residues long: MEGKTVISSLLIMSLVLAQIQVEAKICCPTKDDRSVYFVCMLSVSSQFYCLLKSKCKNTSQTICPPGYTNDILENSGDAVNEYCKLGCASSVCGALTTLQNFDTSKVLSEAVEQCTKACSSVCTGGSTAAVKSA.

Positions 1 to 24 (MEGKTVISSLLIMSLVLAQIQVEA) are cleaved as a signal peptide. 3 cysteine pairs are disulfide-bonded: C27/C64, C28/C56, and C40/C50. Positions 71–134 (DILENSGDAV…GGSTAAVKSA (64 aa)) are cleaved as a propeptide — acidic domain.

This sequence belongs to the plant thionin (TC 1.C.44) family. As to expression, low basal expression in seedlings. Also detected in rosette leaves.

Its subcellular location is the secreted. In terms of biological role, thionins are small plant proteins which are toxic to animal cells. They seem to exert their toxic effect at the level of the cell membrane. Their precise function is not known. The sequence is that of Thionin-2.2 (THI2.2) from Arabidopsis thaliana (Mouse-ear cress).